The chain runs to 200 residues: 3-isopropylmalate dehydratase small subunit (200 aa).

The protein belongs to the LeuD family. LeuD type 1 subfamily. In terms of assembly, heterodimer of LeuC and LeuD.

The catalysed reaction is (2R,3S)-3-isopropylmalate = (2S)-2-isopropylmalate. It functions in the pathway amino-acid biosynthesis; L-leucine biosynthesis; L-leucine from 3-methyl-2-oxobutanoate: step 2/4. Functionally, catalyzes the isomerization between 2-isopropylmalate and 3-isopropylmalate, via the formation of 2-isopropylmaleate. The sequence is that of 3-isopropylmalate dehydratase small subunit from Vibrio vulnificus (strain CMCP6).